A 211-amino-acid chain; its full sequence is FMN-dependent NADH:quinone oxidoreductase (211 aa).

FMN is bound by residues S10 and 16–18 (STS).

It belongs to the azoreductase type 1 family. In terms of assembly, homodimer. FMN is required as a cofactor.

It carries out the reaction 2 a quinone + NADH + H(+) = 2 a 1,4-benzosemiquinone + NAD(+). The catalysed reaction is N,N-dimethyl-1,4-phenylenediamine + anthranilate + 2 NAD(+) = 2-(4-dimethylaminophenyl)diazenylbenzoate + 2 NADH + 2 H(+). Its function is as follows. Quinone reductase that provides resistance to thiol-specific stress caused by electrophilic quinones. Functionally, also exhibits azoreductase activity. Catalyzes the reductive cleavage of the azo bond in aromatic azo compounds to the corresponding amines. The protein is FMN-dependent NADH:quinone oxidoreductase of Frankia casuarinae (strain DSM 45818 / CECT 9043 / HFP020203 / CcI3).